A 240-amino-acid polypeptide reads, in one-letter code: tRNA (guanine-N(1)-)-methyltransferase (240 aa).

Residues G110 and 129-134 (LGDFVL) contribute to the S-adenosyl-L-methionine site.

This sequence belongs to the RNA methyltransferase TrmD family. In terms of assembly, homodimer.

It is found in the cytoplasm. It carries out the reaction guanosine(37) in tRNA + S-adenosyl-L-methionine = N(1)-methylguanosine(37) in tRNA + S-adenosyl-L-homocysteine + H(+). Specifically methylates guanosine-37 in various tRNAs. This is tRNA (guanine-N(1)-)-methyltransferase from Clostridium botulinum (strain Langeland / NCTC 10281 / Type F).